The sequence spans 621 residues: Glutamyl-tRNA(Gln) amidotransferase subunit B, mitochondrial (621 aa).

The N-terminal 41 residues, 1–41 (MARLPTTELRKYLLTGQFTRRGCLHLRPSPLAPPIPPLRTL), are a transit peptide targeting the mitochondrion. Disordered stretches follow at residues 26–86 (LRPS…DNQT) and 106–136 (SKLF…APFD). Composition is skewed to low complexity over residues 38 to 57 (LRTL…QIIP) and 110 to 120 (SPASTPSSSSD).

Belongs to the GatB/GatE family. GatB subfamily. In terms of assembly, subunit of the heterotrimeric GatCAB amidotransferase (AdT) complex, composed of A, B and C subunits.

The protein localises to the mitochondrion. The enzyme catalyses L-glutamyl-tRNA(Gln) + L-glutamine + ATP + H2O = L-glutaminyl-tRNA(Gln) + L-glutamate + ADP + phosphate + H(+). Its function is as follows. Allows the formation of correctly charged Gln-tRNA(Gln) through the transamidation of misacylated Glu-tRNA(Gln) in the mitochondria. The reaction takes place in the presence of glutamine and ATP through an activated gamma-phospho-Glu-tRNA(Gln). The chain is Glutamyl-tRNA(Gln) amidotransferase subunit B, mitochondrial from Podospora anserina (strain S / ATCC MYA-4624 / DSM 980 / FGSC 10383) (Pleurage anserina).